Here is a 50-residue protein sequence, read N- to C-terminus: MKAIMVLFYVMMLTIIASVSMVNGSPGKDDYVNPKEQLGYDILEKLRQKP.

An N-terminal signal peptide occupies residues M1–P26.

Monomer. As to expression, expressed in venom sac and, to a lesser extent, in venom gland. Not expressed in brain.

The protein resides in the secreted. Functionally, amphipathic peptide which probably adopts an alpha-helical structure. When injected in subesophageal ganglia of cockroach P.americana, a natural host for larvae of A.compressa, dampens the escape response for about 1 hour which may contribute to early stages of hypokinesia. Has no antimicrobial activity against E.coli DH5alpha or B.thuringiensis. Is not cytotoxic in vitro. The chain is Ampulexin 1 from Ampulex compressa (Emerald cockroach wasp).